A 538-amino-acid polypeptide reads, in one-letter code: Succinyl-CoA:acetate CoA-transferase (538 aa).

305–309 (GVGSV) serves as a coordination point for CoA. The active-site 5-glutamyl coenzyme A thioester intermediate is the glutamate 330. CoA-binding residues include asparagine 420 and glycine 424.

The protein belongs to the acetyl-CoA hydrolase/transferase family.

The enzyme catalyses succinyl-CoA + acetate = succinate + acetyl-CoA. Its function is as follows. Forms succinyl-CoA from succinate and acetyl-CoA. This Clostridium kluyveri (strain ATCC 8527 / DSM 555 / NBRC 12016 / NCIMB 10680 / K1) protein is Succinyl-CoA:acetate CoA-transferase.